Consider the following 221-residue polypeptide: Small ribosomal subunit protein uS3 (221 aa).

Residues 39 to 107 (IRNYIKEKLY…TVILNIIEVK (69 aa)) form the KH type-2 domain.

The protein belongs to the universal ribosomal protein uS3 family. As to quaternary structure, part of the 30S ribosomal subunit. Forms a tight complex with proteins S10 and S14.

Binds the lower part of the 30S subunit head. Binds mRNA in the 70S ribosome, positioning it for translation. The polypeptide is Small ribosomal subunit protein uS3 (Caldanaerobacter subterraneus subsp. tengcongensis (strain DSM 15242 / JCM 11007 / NBRC 100824 / MB4) (Thermoanaerobacter tengcongensis)).